The chain runs to 428 residues: Putative heme-binding peroxidase (428 aa).

Positions 1 to 33 (MTAIQKPVVAKREAPKAEVNPTVSRSTQTETIK) are disordered. Positions 21 to 32 (PTVSRSTQTETI) are enriched in polar residues. The active-site Proton acceptor is the His-188. Position 312 (His-312) interacts with heme b. The active-site Tryptophan radical intermediate is the Trp-328.

Belongs to the peroxidase family. Cytochrome c peroxidase subfamily. It depends on heme b as a cofactor.

Destroys radicals which are normally produced within the cells and which are toxic to biological systems. The sequence is that of Putative heme-binding peroxidase from Debaryomyces hansenii (strain ATCC 36239 / CBS 767 / BCRC 21394 / JCM 1990 / NBRC 0083 / IGC 2968) (Yeast).